A 113-amino-acid polypeptide reads, in one-letter code: B-type lectin plumieribetin (113 aa).

In terms of domain architecture, Bulb-type lectin spans 1-109 (NYLSKNDELR…STEIWNSDKN (109 aa)).

Homotetramer. Interacts with alpha-1-beta-1 integrin (ITGA1/ITGB1). In terms of processing, not glycosylated. Not N-glycosylated and not O-glycosylated with the mostcommon O-linked glycoconjugates. Post-translationally, the N-terminus is blocked. As to expression, expressed by sting venom glands and is also found in skin mucus. Not found in other tissues tested.

The protein resides in the secreted. Its function is as follows. May contribute to some of the local and systemic effects of envenomation by the scorpionfish. Preferentially recognizes mannose-containing carbohydrate structures, but its interaction with single mannose residues is weak. Potently inhibits alpha-1-beta-1 integrin (ITGA1/ITGB1) binding to basement membrane collagen IV in a divalent cation-independent manner. In addition, moderately inhibits both laminin binding integrins alpha-3-beta-1 (ITGA3/ITGB1) and alpha-7-beta-1 (ITGA7/ITGB1). Weakens the cell-collagen contacts, reduces cell spreading, and alters the actin cytoskeleton, after the compensating alpha-2-beta-1 integrin is blocked. On the cellular level, fails to completely detach hepatocarcinoma HepG2 cells and primary arterial smooth muscle cells from the collagen IV fragment CB3. This Scorpaena plumieri (Spotted scorpionfish) protein is B-type lectin plumieribetin.